We begin with the raw amino-acid sequence, 85 residues long: UPF0297 protein lhv_0439 (85 aa).

This sequence belongs to the UPF0297 family.

The protein is UPF0297 protein lhv_0439 of Lactobacillus helveticus (strain DPC 4571).